The primary structure comprises 117 residues: MPPKKDPKGGKAPPSKKKEGSGGGKAKKKKWSKGKVRDKLNNMVLFDQATYDKLYKEVITYKLITPSVVSERLKVRASLAKAGLKELQAKGLVKCVVHHHGQVVYTRATKEADVIVE.

The tract at residues 1-34 is disordered; sequence MPPKKDPKGGKAPPSKKKEGSGGGKAKKKKWSKG. Residues 25–34 are compositionally biased toward basic residues; it reads KAKKKKWSKG.

The protein belongs to the eukaryotic ribosomal protein eS25 family.

The polypeptide is Small ribosomal subunit protein eS25 (rps-25) (Caenorhabditis elegans).